A 221-amino-acid chain; its full sequence is MRIFNQTEIRIIGCLIEKEVTTPEQYPLTLNALTTACNQKSNRDPVTSMSDSDVLDSLNTLVSERVVTDETRGNSRVAKYQHRFCNTEFGSLKLSKQEMAVLCVLFLRGPQTPGELRTRTQRLCEFDNVAEVESVLTTLGLSEASPMVTKLEKEPGKREARYAHLFCGEVINDVTVVDKTNVTNHSNSTENDERITLLESEVAELKAEMAQLTQLVNDLLA.

The protein belongs to the UPF0502 family.

This chain is UPF0502 protein VSAL_II0605, found in Aliivibrio salmonicida (strain LFI1238) (Vibrio salmonicida (strain LFI1238)).